Here is a 344-residue protein sequence, read N- to C-terminus: GTP 3',8-cyclase (344 aa).

The 221-residue stretch at 19–239 folds into the Radical SAM core domain; sequence PFGRTIDYLR…ANYTLTDLPD (221 aa). Residue arginine 28 participates in GTP binding. [4Fe-4S] cluster is bound by residues cysteine 35 and cysteine 39. Residue tyrosine 41 participates in S-adenosyl-L-methionine binding. Residue cysteine 42 coordinates [4Fe-4S] cluster. Arginine 77 contributes to the GTP binding site. Glycine 81 contacts S-adenosyl-L-methionine. Threonine 111 provides a ligand contact to GTP. Serine 135 contacts S-adenosyl-L-methionine. Lysine 171 provides a ligand contact to GTP. An S-adenosyl-L-methionine-binding site is contributed by methionine 205. Residues cysteine 268 and cysteine 271 each coordinate [4Fe-4S] cluster. 273-275 lines the GTP pocket; it reads RVR. Cysteine 285 lines the [4Fe-4S] cluster pocket.

Belongs to the radical SAM superfamily. MoaA family. Monomer and homodimer. The cofactor is [4Fe-4S] cluster.

It carries out the reaction GTP + AH2 + S-adenosyl-L-methionine = (8S)-3',8-cyclo-7,8-dihydroguanosine 5'-triphosphate + 5'-deoxyadenosine + L-methionine + A + H(+). It participates in cofactor biosynthesis; molybdopterin biosynthesis. Functionally, catalyzes the cyclization of GTP to (8S)-3',8-cyclo-7,8-dihydroguanosine 5'-triphosphate. The sequence is that of GTP 3',8-cyclase from Rhodopseudomonas palustris (strain TIE-1).